Consider the following 265-residue polypeptide: Shikimate dehydrogenase (NADP(+)) (265 aa).

Shikimate-binding positions include 14–16 and threonine 61; that span reads SLS. The active-site Proton acceptor is lysine 65. Positions 85 and 100 each coordinate shikimate. NADP(+) contacts are provided by residues 123–127, 146–151, and alanine 209; these read GAGGA and NRTESK. Position 211 (tyrosine 211) interacts with shikimate. Glycine 232 is an NADP(+) binding site.

Belongs to the shikimate dehydrogenase family. As to quaternary structure, homodimer.

It carries out the reaction shikimate + NADP(+) = 3-dehydroshikimate + NADPH + H(+). It participates in metabolic intermediate biosynthesis; chorismate biosynthesis; chorismate from D-erythrose 4-phosphate and phosphoenolpyruvate: step 4/7. Involved in the biosynthesis of the chorismate, which leads to the biosynthesis of aromatic amino acids. Catalyzes the reversible NADPH linked reduction of 3-dehydroshikimate (DHSA) to yield shikimate (SA). The chain is Shikimate dehydrogenase (NADP(+)) from Haloarcula marismortui (strain ATCC 43049 / DSM 3752 / JCM 8966 / VKM B-1809) (Halobacterium marismortui).